The chain runs to 148 residues: uncharacterized protein (148 aa).

This is an uncharacterized protein from Acanthamoeba polyphaga mimivirus (APMV).